Consider the following 356-residue polypeptide: uncharacterized protein (356 aa).

6 consecutive transmembrane segments (helical) span residues 2–22 (FEAI…FHRL), 36–56 (YVTV…VPIF), 77–97 (MFYT…IGDY), 99–119 (IITA…GPFL), 124–144 (IISL…LSLI), and 154–174 (LFLI…FVDI). A GGDEF domain is found at 218–353 (QSLGLLLIDI…GRNQVMFNPI (136 aa)).

The protein localises to the cell membrane. This is an uncharacterized protein from Staphylococcus saprophyticus subsp. saprophyticus (strain ATCC 15305 / DSM 20229 / NCIMB 8711 / NCTC 7292 / S-41).